The chain runs to 475 residues: Protein transport protein Sec61 subunit alpha (475 aa).

The Cytoplasmic segment spans residues 1 to 32 (MGFRFLDIVKPFTSLVPEVGQPDRKIPFREKV). The helical transmembrane segment at 33 to 53 (LWTAICLFIFLVCSQIPLYGI) threads the bilayer. Residues 54-75 (RSTDSSDPFYWAKVIMASNRGT) are Lumenal-facing. Residues 76–96 (LMELGISPIVTSGMVMQLLAG) form a helical membrane-spanning segment. At 97–118 (AKLIEIDQSVKADRDLFSAAQK) the chain is on the cytoplasmic side. The helical transmembrane segment at 119–139 (LFGMLICVGQGVAYIWSGSYG) threads the bilayer. Residues 140–145 (DPAVLG) lie on the Lumenal side of the membrane. Residues 146 to 166 (FGNCFLIVLQLFFAGIIVMLL) traverse the membrane as a helical segment. Residues 167-173 (DELLQKG) are Cytoplasmic-facing. The chain crosses the membrane as a helical span at residues 174 to 194 (YGIGSGISLFIATNICETIVW). At 195–241 (KTFSPTTVSVGKGTEFEGAVIALFHLLLTRNDKVRALKEAFYRQNLP) the chain is on the lumenal side. Residues 242 to 262 (NITNLLATVLIFMVVIYFQGF) form a helical membrane-spanning segment. Topologically, residues 263-289 (RVDLPVKSTRVSGQQGTYPIKLFYTSN) are cytoplasmic. The helical transmembrane segment at 290-310 (IPIILQSALVSNLYFISQLLY) threads the bilayer. The Lumenal portion of the chain corresponds to 311–353 (RRFPDNILVNLFGAWRTSEYSQQMIPVSGLTYYISSPNNMSAV). Residues 354–374 (LADPFHALFYITFMLTSCALF) form a helical membrane-spanning segment. Residues 375 to 411 (SKVWIEVSGSSARDVAKQLKDQQMTMKGHRDTSVIKE) lie on the Cytoplasmic side of the membrane. A helical transmembrane segment spans residues 412-434 (LNRYIPTAAAFGGLCIGALTVVA). At 435–440 (DFMGAI) the chain is on the lumenal side. A helical transmembrane segment spans residues 441-461 (GSGTGILLAVTIIYQYFETFV). Topologically, residues 462–475 (KEQQELSGGIGGLF) are cytoplasmic.

The protein belongs to the SecY/SEC61-alpha family. Heterotrimeric complex composed of SEC61-alpha, SEC61-beta and SEC61-gamma.

It localises to the endoplasmic reticulum membrane. In terms of biological role, appears to play a crucial role in the insertion of secretory and membrane polypeptides into the ER. It is required for assembly of membrane and secretory proteins. Found to be tightly associated with membrane-bound ribosomes, either directly or through adaptor proteins. The protein is Protein transport protein Sec61 subunit alpha (sec61a) of Dictyostelium discoideum (Social amoeba).